Here is a 169-residue protein sequence, read N- to C-terminus: Lipoprotein signal peptidase (169 aa).

The next 3 helical transmembrane spans lie at 12 to 32, 70 to 90, and 102 to 122; these read WLWL…WILG, WFFA…MYRS, and AFII…GFVV. Catalysis depends on residues D123 and D141. Residues 137 to 157 traverse the membrane as a helical segment; that stretch reads FNLADSFICVGAAMIVLEGFL.

It belongs to the peptidase A8 family.

The protein resides in the cell inner membrane. It catalyses the reaction Release of signal peptides from bacterial membrane prolipoproteins. Hydrolyzes -Xaa-Yaa-Zaa-|-(S,diacylglyceryl)Cys-, in which Xaa is hydrophobic (preferably Leu), and Yaa (Ala or Ser) and Zaa (Gly or Ala) have small, neutral side chains.. It functions in the pathway protein modification; lipoprotein biosynthesis (signal peptide cleavage). In terms of biological role, this protein specifically catalyzes the removal of signal peptides from prolipoproteins. This Serratia proteamaculans (strain 568) protein is Lipoprotein signal peptidase.